We begin with the raw amino-acid sequence, 85 residues long: MAVIKAVDMSEKMQQEAIHAAVQAMEKFTIEKDIAAFIKREFDKKFSPTWHCIVGRNFGSFVTHESRHFIYFYLGTVAFLLFKSG.

It belongs to the dynein light chain family. Homodimer. Cytoplasmic dynein consists of two catalytic heavy chains (HCs) and a number of non-catalytic subunits which present intermediate chains (ICs), light intermediate chains (LICs) and light chains (LCs). Component of the nuclear pore complex (NPC). NPC constitutes the exclusive means of nucleocytoplasmic transport. NPCs allow the passive diffusion of ions and small molecules and the active, nuclear transport receptor-mediated bidirectional transport of macromolecules such as proteins, RNAs, ribonucleoparticles (RNPs), and ribosomal subunits across the nuclear envelope. Due to its 8-fold rotational symmetry, all subunits are present with 8 copies or multiples thereof.

Its subcellular location is the cytoplasm. It localises to the cytoskeleton. The protein localises to the nucleus. The protein resides in the nuclear pore complex. Acts as one of several non-catalytic accessory components of the cytoplasmic dynein complex that are thought to be involved in linking dynein to cargos and to adapter proteins that regulate dynein function. Cytoplasmic dynein 1 acts as a motor for the intracellular retrograde motility of vesicles and organelles along microtubules. May play a role in changing or maintaining the spatial distribution of cytoskeletal structures. Also a component of the nuclear pore complex. In Schizosaccharomyces pombe (strain 972 / ATCC 24843) (Fission yeast), this protein is Dynein light chain 1, cytoplasmic (dlc2).